A 137-amino-acid polypeptide reads, in one-letter code: NADH dehydrogenase [ubiquinone] 1 beta subcomplex subunit 7 (137 aa).

A lipid anchor (N-myristoyl glycine) is attached at Gly-2. The CHCH domain occupies Arg-56–Arg-98. The Cx9C motif 1 signature appears at Cys-59–Cys-69. 2 disulfide bridges follow: Cys-59-Cys-90 and Cys-69-Cys-80. Ser-73 is modified (phosphoserine). Positions Cys-80–Cys-90 match the Cx9C motif 2 motif. The tract at residues Gln-110–Leu-137 is disordered.

Belongs to the complex I NDUFB7 subunit family. Complex I is composed of 45 different subunits.

It localises to the mitochondrion inner membrane. The protein resides in the mitochondrion intermembrane space. In terms of biological role, accessory subunit of the mitochondrial membrane respiratory chain NADH dehydrogenase (Complex I), that is believed not to be involved in catalysis. Complex I functions in the transfer of electrons from NADH to the respiratory chain. The immediate electron acceptor for the enzyme is believed to be ubiquinone. This chain is NADH dehydrogenase [ubiquinone] 1 beta subcomplex subunit 7 (NDUFB7), found in Bos taurus (Bovine).